Here is a 122-residue protein sequence, read N- to C-terminus: Large ribosomal subunit protein uL14 (122 aa).

The protein belongs to the universal ribosomal protein uL14 family. In terms of assembly, part of the 50S ribosomal subunit. Forms a cluster with proteins L3 and L19. In the 70S ribosome, L14 and L19 interact and together make contacts with the 16S rRNA in bridges B5 and B8.

Its function is as follows. Binds to 23S rRNA. Forms part of two intersubunit bridges in the 70S ribosome. This chain is Large ribosomal subunit protein uL14, found in Macrococcus caseolyticus (strain JCSC5402) (Macrococcoides caseolyticum).